The following is a 254-amino-acid chain: UPF0173 protein YddR (254 aa).

The protein belongs to the UPF0173 family.

The sequence is that of UPF0173 protein YddR (yddR) from Bacillus subtilis (strain 168).